The following is an 803-amino-acid chain: 3',5'-cyclic-AMP phosphodiesterase 4D (803 aa).

The disordered stretch occupies residues 1–103 (MEAEGSSVPA…SGASRVRHRG (103 aa)). Residues His52 and His56 each carry the phosphoserine modification. Residues 58 to 85 (PPPPPPSPQPQLQPPPPPPLPPPPPPPG) are compositionally biased toward pro residues. Residues Ser137, Ser294, Ser296, Ser343, and Ser370 each carry the phosphoserine modification. Residues 338–358 (EVEIPSPTQKEKEKKKRPMSQ) are disordered. In terms of domain architecture, PDEase spans 381–710 (VKTEQEDVLA…EWYQSTIPQS (330 aa)). Lys382 is covalently cross-linked (Glycyl lysine isopeptide (Lys-Gly) (interchain with G-Cter in SUMO)). Residue His457 is the Proton donor of the active site. His457 provides a ligand contact to 3',5'-cyclic AMP. Position 457 (His457) interacts with AMP. Residues His461, His497, Asp498, and Asp615 each coordinate Zn(2+). Residues Asp498, Asp615, Asn618, Gln666, and Phe669 each coordinate AMP. Position 498 (Asp498) interacts with Mg(2+). Asp498 lines the Mn(2+) pocket. The 3',5'-cyclic AMP site is built by Gln666 and Phe669. Disordered regions lie at residues 705-724 (STIPQSPSPAPDDQEDGRQG) and 732-803 (ELTL…CPDT). A compositionally biased stretch (polar residues) spans 757-768 (CSDSKTLCTQDS). Residues 774–789 (PLDEQVEEEAVAEEES) show a composition bias toward acidic residues.

Belongs to the cyclic nucleotide phosphodiesterase family. PDE4 subfamily. As to quaternary structure, homodimer for the long isoforms. Isoforms with truncated N-termini are monomeric. Binds ARRB2. Isoform 33 is part of a ternary complex containing PRKAR2A, PRKAR2B and AKAP9. Identified in a complex composed of RYR1, PDE4D, PKA, FKBP1A and protein phosphatase 1 (PP1). Interacts with PDE4DIP. Isoform 5 interacts (via N-terminal region) with SHANK2 (via proline-rich region); the interaction is increased in a PKA-dependent manner. Isoform 33, isoform 4, isoform 7, isoform 8 and isoform 9 but not isoform 32 and isoform 6 interact with SHANK2. Isoform 31 interacts weakly with SHANK2. It depends on Zn(2+) as a cofactor. The cofactor is Mg(2+). Requires Mn(2+) as cofactor. Post-translationally, isoform 1 and isoform 9 are rapidly activated by PKA through phosphorylation. Long isoforms that share a conserved PKA phosphorylation site in the N-terminus are also activated. Sumoylation of long isoforms by PIAS4 augments their activation by PKA phosphorylation and represses their inhibition by ERK phosphorylation. In terms of tissue distribution, expressed in epithelial cells. Isoform 33, isoform 4, isoform 5 and isoform 9 are expressed in brain. Isoform 33, isoform 5, isoform 8 and isoform 9 are expressed in heart (at protein level). Isoform 4 and isoform 6 are strongly expressed in cortex and cerebellum. Isoform 7 is strongly expressed in cortex and testis; weakly expressed in kidney, lung, spleen and cerebellum. Isoform 8 is strongly expressed in lung, heart and liver. Isoform 31, isoform 32, isoform 33, isoform 5 and isoform 9 are widely distributed.

The protein localises to the apical cell membrane. Its subcellular location is the cytoplasm. It localises to the membrane. The protein resides in the cytoskeleton. It is found in the microtubule organizing center. The protein localises to the centrosome. The catalysed reaction is 3',5'-cyclic AMP + H2O = AMP + H(+). It functions in the pathway purine metabolism; 3',5'-cyclic AMP degradation; AMP from 3',5'-cyclic AMP: step 1/1. With respect to regulation, activated by phosphatidic acid. Inhibited by rolipram. Its function is as follows. Hydrolyzes the second messenger cAMP, which is a key regulator of many important physiological processes. This chain is 3',5'-cyclic-AMP phosphodiesterase 4D (Pde4d), found in Rattus norvegicus (Rat).